Consider the following 581-residue polypeptide: Probable CDP-diacylglycerol--glycerol-3-phosphate 3-phosphatidyltransferase (581 aa).

A disordered region spans residues 27–65; sequence RSATTTTTTTTKACGNGSSQSPPSTPLLSSKSSTITSNK. Over residues 44–65 the composition is skewed to low complexity; sequence SSQSPPSTPLLSSKSSTITSNK. Residue 160–167 participates in ATP binding; the sequence is ASLYLGTS. 2 PLD phosphodiesterase domains span residues 248-274 and 487-520; these read TIGV…SKDY and DKWT…GSRS. Residues H253, K255, and D260 contribute to the active site.

It belongs to the CDP-alcohol phosphatidyltransferase class-II family.

The enzyme catalyses a CDP-1,2-diacyl-sn-glycerol + sn-glycerol 3-phosphate = a 1,2-diacyl-sn-glycero-3-phospho-(1'-sn-glycero-3'-phosphate) + CMP + H(+). The protein operates within phospholipid metabolism; phosphatidylglycerol biosynthesis; phosphatidylglycerol from CDP-diacylglycerol: step 1/2. Functions in the biosynthesis of the anionic phospholipids phosphatidylglycerol and cardiolipin. This is Probable CDP-diacylglycerol--glycerol-3-phosphate 3-phosphatidyltransferase (pgs1) from Dictyostelium discoideum (Social amoeba).